Here is a 192-residue protein sequence, read N- to C-terminus: NOP protein chaperone 1 (192 aa).

Residues 1–26 show a composition bias toward low complexity; the sequence is MEVSGESHSGPSCSSSSRDGSGVSVS. A disordered region spans residues 1–39; the sequence is MEVSGESHSGPSCSSSSRDGSGVSVSKELLMAGSGGRGG. Phosphoserine occurs at positions 34 and 66. Residues 118-192 are disordered; the sequence is FEMNQSHSKE…SENKEKQENK (75 aa). Positions 129–152 are enriched in acidic residues; the sequence is DSSEENSQDSSEESSESEDEDDST. The segment covering 164–177 has biased composition (basic and acidic residues); the sequence is KLPHSEDGKGKIEV. Phosphoserine is present on serine 180.

In terms of assembly, interacts with NOP58, RUVBL1 and RUVBL2; the interactions are direct and NOPCHAP1 bridges the association of NOP58 with RUVBL1:RUVBL2 even in absence of snoRNAs. The interactions with RUVBL1 and RUVBL2 are disrupted upon ATP binding.

It localises to the nucleus. In terms of biological role, client-loading PAQosome/R2TP complex cofactor that selects NOP58 to promote box C/D small nucleolar ribonucleoprotein (snoRNP) assembly. Acts as a bridge between NOP58 and the R2TP complex via RUVBL1:RUVBL2. This is NOP protein chaperone 1 (NOPCHAP1) from Bos taurus (Bovine).